A 561-amino-acid polypeptide reads, in one-letter code: Arginine--tRNA ligase (561 aa).

The 'HIGH' region signature appears at 129–139 (ANPTGPLHVGH).

The protein belongs to the class-I aminoacyl-tRNA synthetase family. Monomer.

It is found in the cytoplasm. It catalyses the reaction tRNA(Arg) + L-arginine + ATP = L-arginyl-tRNA(Arg) + AMP + diphosphate. The sequence is that of Arginine--tRNA ligase from Bordetella avium (strain 197N).